Here is a 422-residue protein sequence, read N- to C-terminus: Phagosome assembly factor 1 (422 aa).

Belongs to the PHAF1 family. As to quaternary structure, interacts with BCAS3; the interaction is requrired for the association with the phagophore.

It localises to the cytoplasm. Its subcellular location is the preautophagosomal structure. In terms of biological role, plays a regulatory role in autophagic activity. In complex with BCAS3, associates with the autophagosome formation site during both non-selective and selective autophagy. The sequence is that of Phagosome assembly factor 1 (Phaf1) from Rattus norvegicus (Rat).